The sequence spans 119 residues: Large ribosomal subunit protein bL20 (119 aa).

It belongs to the bacterial ribosomal protein bL20 family.

Its function is as follows. Binds directly to 23S ribosomal RNA and is necessary for the in vitro assembly process of the 50S ribosomal subunit. It is not involved in the protein synthesizing functions of that subunit. The chain is Large ribosomal subunit protein bL20 from Streptococcus agalactiae serotype Ia (strain ATCC 27591 / A909 / CDC SS700).